Here is a 399-residue protein sequence, read N- to C-terminus: Protochlorophyllide reductase, chloroplastic (399 aa).

Residues 1–64 constitute a chloroplast transit peptide; that stretch reads MALQTASMLP…RQKVGAVRAE (64 aa).

The protein belongs to the short-chain dehydrogenases/reductases (SDR) family. POR subfamily.

The protein localises to the plastid. It localises to the chloroplast. The enzyme catalyses chlorophyllide a + NADP(+) = protochlorophyllide a + NADPH + H(+). The protein operates within porphyrin-containing compound metabolism; chlorophyll biosynthesis. Functionally, phototransformation of protochlorophyllide (Pchlide) to chlorophyllide (Chlide). This is Protochlorophyllide reductase, chloroplastic (3PCR) from Pisum sativum (Garden pea).